Here is a 205-residue protein sequence, read N- to C-terminus: GTP cyclohydrolase-2 (205 aa).

Position 49–53 (49–53 (RIHSE)) interacts with GTP. Zn(2+) is bound by residues Cys54, Cys65, and Cys67. GTP-binding positions include Gln70, 92-94 (EGR), and Thr114. Catalysis depends on Asp126, which acts as the Proton acceptor. Arg128 (nucleophile) is an active-site residue. Residues Thr149 and Lys154 each coordinate GTP.

The protein belongs to the GTP cyclohydrolase II family. Zn(2+) is required as a cofactor.

It catalyses the reaction GTP + 4 H2O = 2,5-diamino-6-hydroxy-4-(5-phosphoribosylamino)-pyrimidine + formate + 2 phosphate + 3 H(+). It participates in cofactor biosynthesis; riboflavin biosynthesis; 5-amino-6-(D-ribitylamino)uracil from GTP: step 1/4. In terms of biological role, catalyzes the conversion of GTP to 2,5-diamino-6-ribosylamino-4(3H)-pyrimidinone 5'-phosphate (DARP), formate and pyrophosphate. The polypeptide is GTP cyclohydrolase-2 (Shewanella denitrificans (strain OS217 / ATCC BAA-1090 / DSM 15013)).